A 454-amino-acid chain; its full sequence is uncharacterized protein (454 aa).

Residues 422 to 454 (EWLPPAHLDHGQPRTNSYFHPEKLLHDSDEDDP) are disordered.

This sequence belongs to the Rv1128c/1148c/1588c/1702c/1945/3466 family.

This is an uncharacterized protein from Mycobacterium tuberculosis (strain CDC 1551 / Oshkosh).